Here is a 339-residue protein sequence, read N- to C-terminus: ATPase GET3 (339 aa).

37 to 44 lines the ATP pocket; sequence KGGVGKTT. Asp66 is an active-site residue. Positions 237 and 264 each coordinate ATP. Zn(2+)-binding residues include Cys275 and Cys278.

This sequence belongs to the arsA ATPase family. In terms of assembly, homodimer.

The protein resides in the cytoplasm. The protein localises to the endoplasmic reticulum. In terms of biological role, ATPase required for the post-translational delivery of tail-anchored (TA) proteins to the endoplasmic reticulum. Recognizes and selectively binds the transmembrane domain of TA proteins in the cytosol. This complex then targets to the endoplasmic reticulum by membrane-bound receptors, where the tail-anchored protein is released for insertion. This process is regulated by ATP binding and hydrolysis. ATP binding drives the homodimer towards the closed dimer state, facilitating recognition of newly synthesized TA membrane proteins. ATP hydrolysis is required for insertion. Subsequently, the homodimer reverts towards the open dimer state, lowering its affinity for the membrane-bound receptor, and returning it to the cytosol to initiate a new round of targeting. The sequence is that of ATPase GET3 from Rhodotorula glutinis (Yeast).